The chain runs to 179 residues: Mediator of RNA polymerase II transcription subunit 28 (179 aa).

Positions 1-43 are disordered; the sequence is MASSMCGMFPGQQPPGSLPPPGPGGPGQPGLLTGTPGNRGANN. Over residues 12–26 the composition is skewed to pro residues; it reads QQPPGSLPPPGPGGP. Residues 109-139 adopt a coiled-coil conformation; that stretch reads EQVEKEDASELKNELQRKEMLIQKHLAKIHH.

Belongs to the Mediator complex subunit 28 family. Component of the Mediator complex.

The protein resides in the nucleus. Component of the Mediator complex, a coactivator involved in the regulated transcription of nearly all RNA polymerase II-dependent genes. Mediator functions as a bridge to convey information from gene-specific regulatory proteins to the basal RNA polymerase II transcription machinery. Mediator is recruited to promoters by direct interactions with regulatory proteins and serves as a scaffold for the assembly of a functional preinitiation complex with RNA polymerase II and the general transcription factors. The sequence is that of Mediator of RNA polymerase II transcription subunit 28 (med28) from Danio rerio (Zebrafish).